The primary structure comprises 1262 residues: Isoleucine--tRNA ligase, cytoplasmic (1262 aa).

At methionine 1 the chain carries N-acetylmethionine. A 'HIGH' region motif is present at residues proline 48 to histidine 58. The short motif at lysine 600–arginine 604 is the 'KMSKS' region element. ATP is bound at residue lysine 603. Phosphoserine occurs at positions 1047 and 1049. At threonine 1058 the chain carries Phosphothreonine.

It belongs to the class-I aminoacyl-tRNA synthetase family. Part of a multisubunit complex that groups tRNA ligases for Arg (RARS1), Asp (DARS1), Gln (QARS1), Ile (IARS1), Leu (LARS1), Lys (KARS1), Met (MARS1) the bifunctional ligase for Glu and Pro (EPRS1) and the auxiliary subunits AIMP1/p43, AIMP2/p38 and EEF1E1/p18. As to expression, expressed in liver and muscle (at protein level).

The protein localises to the cytoplasm. Its subcellular location is the cytosol. The enzyme catalyses tRNA(Ile) + L-isoleucine + ATP = L-isoleucyl-tRNA(Ile) + AMP + diphosphate. In terms of biological role, catalyzes the specific attachment of an amino acid to its cognate tRNA in a 2 step reaction: the amino acid (AA) is first activated by ATP to form AA-AMP and then transferred to the acceptor end of the tRNA. This is Isoleucine--tRNA ligase, cytoplasmic from Homo sapiens (Human).